The chain runs to 563 residues: GTPase Obg (563 aa).

The region spanning 2–168 is the Obg domain; it reads SDFVDRVTVH…RDVILELKSI (167 aa). Residues 169-349 enclose the OBG-type G domain; that stretch reads ADVALVGFPS…LNFALSALVH (181 aa). GTP-binding positions include 175–182, 200–204, 221–224, 301–304, and 330–332; these read GFPSAGKS, FTTLV, DVPG, NKID, and STA. Mg(2+)-binding residues include Ser-182 and Thr-202. The 87-residue stretch at 383–469 folds into the OCT domain; sequence DEGGSALEFT…ARMVEFDWDP (87 aa). The segment at 529 to 563 is disordered; it reads RKAGHWADPTVDDDRHDETSLFGHGESSEDGETEE.

Belongs to the TRAFAC class OBG-HflX-like GTPase superfamily. OBG GTPase family. In terms of assembly, monomer. Mg(2+) serves as cofactor.

It is found in the cytoplasm. Functionally, an essential GTPase which binds GTP, GDP and possibly (p)ppGpp with moderate affinity, with high nucleotide exchange rates and a fairly low GTP hydrolysis rate. Plays a role in control of the cell cycle, stress response, ribosome biogenesis and in those bacteria that undergo differentiation, in morphogenesis control. This Bifidobacterium longum (strain DJO10A) protein is GTPase Obg.